Here is a 436-residue protein sequence, read N- to C-terminus: Tryptophan synthase beta chain (436 aa).

An N6-(pyridoxal phosphate)lysine modification is found at Lys-129.

It belongs to the TrpB family. In terms of assembly, tetramer of two alpha and two beta chains. Pyridoxal 5'-phosphate serves as cofactor.

The enzyme catalyses (1S,2R)-1-C-(indol-3-yl)glycerol 3-phosphate + L-serine = D-glyceraldehyde 3-phosphate + L-tryptophan + H2O. It participates in amino-acid biosynthesis; L-tryptophan biosynthesis; L-tryptophan from chorismate: step 5/5. Functionally, the beta subunit is responsible for the synthesis of L-tryptophan from indole and L-serine. In Prochlorococcus marinus (strain MIT 9313), this protein is Tryptophan synthase beta chain.